The primary structure comprises 113 residues: Putative membrane protein insertion efficiency factor (113 aa).

It belongs to the UPF0161 family.

Its subcellular location is the cell inner membrane. Functionally, could be involved in insertion of integral membrane proteins into the membrane. The chain is Putative membrane protein insertion efficiency factor from Campylobacter jejuni subsp. jejuni serotype O:23/36 (strain 81-176).